The primary structure comprises 205 residues: High frequency lysogenization protein HflD homolog (205 aa).

The protein belongs to the HflD family.

The protein localises to the cytoplasm. It localises to the cell inner membrane. In Shewanella pealeana (strain ATCC 700345 / ANG-SQ1), this protein is High frequency lysogenization protein HflD homolog.